The sequence spans 529 residues: Lysine--tRNA ligase (529 aa).

The 'HIGH' region signature appears at 29-37; it reads ISGSVHIGN. The short motif at 274-278 is the 'KMSKS' region element; sequence AMSKS. Lys-277 lines the ATP pocket.

This sequence belongs to the class-I aminoacyl-tRNA synthetase family.

It localises to the cytoplasm. The enzyme catalyses tRNA(Lys) + L-lysine + ATP = L-lysyl-tRNA(Lys) + AMP + diphosphate. In Methanosphaera stadtmanae (strain ATCC 43021 / DSM 3091 / JCM 11832 / MCB-3), this protein is Lysine--tRNA ligase.